Reading from the N-terminus, the 382-residue chain is Cell division protein FtsZ (382 aa).

GTP contacts are provided by residues 21–25 (GGGNN), 108–110 (GTG), glutamate 139, arginine 143, and aspartate 187. The disordered stretch occupies residues 320 to 382 (KDVTKPQRPS…TFLRNRNKRG (63 aa)). Over residues 326–341 (QRPSLNQSIKTHNQSV) the composition is skewed to polar residues. Over residues 342–351 (PKREPKREEP) the composition is skewed to basic and acidic residues. Polar residues predominate over residues 352–365 (QQQNTVSRHTSQPA).

It belongs to the FtsZ family. Homodimer. Polymerizes to form a dynamic ring structure in a strictly GTP-dependent manner. Interacts directly with several other division proteins. Interacts with FtsA. Interacts with Phi29 DNA replication protein 1. Interacts with the cell division inhibitor MciZ.

Its subcellular location is the cytoplasm. Its activity is regulated as follows. During sporulation, is negatively regulated by MciZ, which binds to FtsZ and inhibits its polymerization and the formation of the Z ring. In terms of biological role, essential cell division protein that forms a contractile ring structure (Z ring) at the future cell division site. The regulation of the ring assembly controls the timing and the location of cell division. One of the functions of the FtsZ ring is to recruit other cell division proteins to the septum to produce a new cell wall between the dividing cells. Binds GTP and shows GTPase activity. This chain is Cell division protein FtsZ, found in Bacillus subtilis (strain 168).